The sequence spans 354 residues: MNSMSTTGPIRVAAIPKHYLQFTVRTYTRSMASAGLRYSNPPLVKKCYDQPTGKRFISSTPQSQIKDYFPPPDAPKIVEVKTAWAHPVYSEEEMRAVTVGHREAKNWSDWVALGSVRLLRWGMDLVTGYKHPAPGQEDIKKFQMTEKEWLRRFVFLESVAGVPGMVGGMLRHLRSLRRMKRDNGWIETLLEEAYNERMHLLTFLKMAEPGWFMRLMVLGAQGVFFNGFFLSYLISPRTCHRFVGYLEEEAVLTYTRAIKDLESGRLPHWEKLEAPEIAVKYWKMPEGNRTMKDLLLYVRADEAKHREVNHTLGNLKQAVDVNPFAVEWKDPSKPHPGKGIKHLKTTGWEREEVV.

Residues 1–64 (MNSMSTTGPI…RFISSTPQSQ (64 aa)) constitute a mitochondrion transit peptide. Residues 153-173 (FVFLESVAGVPGMVGGMLRHL) form a helical membrane-spanning segment. Fe cation is bound by residues Glu157, Glu196, and His199. A helical membrane pass occupies residues 215 to 235 (LMVLGAQGVFFNGFFLSYLIS). Positions 247, 302, and 305 each coordinate Fe cation. The disordered stretch occupies residues 333–354 (KPHPGKGIKHLKTTGWEREEVV). Over residues 335–344 (HPGKGIKHLK) the composition is skewed to basic residues.

This sequence belongs to the alternative oxidase family. The cofactor is Fe cation.

The protein resides in the mitochondrion inner membrane. Its function is as follows. Catalyzes cyanide-resistant oxygen consumption. May increase respiration when the cytochrome respiratory pathway is restricted, or in response to low temperatures. This is Alternative oxidase, mitochondrial (alxA) from Emericella nidulans (strain FGSC A4 / ATCC 38163 / CBS 112.46 / NRRL 194 / M139) (Aspergillus nidulans).